We begin with the raw amino-acid sequence, 629 residues long: UvrABC system protein C (629 aa).

Positions 26 to 105 (TSPGIYQFKN…IKELKPRYNV (80 aa)) constitute a GIY-YIG domain. The region spanning 219-254 (SALIRSLTENMHLAATELRFEQAAEIKAQIESLKRY) is the UVR domain.

Belongs to the UvrC family. As to quaternary structure, interacts with UvrB in an incision complex.

The protein resides in the cytoplasm. Functionally, the UvrABC repair system catalyzes the recognition and processing of DNA lesions. UvrC both incises the 5' and 3' sides of the lesion. The N-terminal half is responsible for the 3' incision and the C-terminal half is responsible for the 5' incision. This Chlorobium chlorochromatii (strain CaD3) protein is UvrABC system protein C.